Reading from the N-terminus, the 949-residue chain is Glycine dehydrogenase (decarboxylating) (949 aa).

K699 carries the post-translational modification N6-(pyridoxal phosphate)lysine.

This sequence belongs to the GcvP family. In terms of assembly, the glycine cleavage system is composed of four proteins: P, T, L and H. It depends on pyridoxal 5'-phosphate as a cofactor.

It carries out the reaction N(6)-[(R)-lipoyl]-L-lysyl-[glycine-cleavage complex H protein] + glycine + H(+) = N(6)-[(R)-S(8)-aminomethyldihydrolipoyl]-L-lysyl-[glycine-cleavage complex H protein] + CO2. Its function is as follows. The glycine cleavage system catalyzes the degradation of glycine. The P protein binds the alpha-amino group of glycine through its pyridoxal phosphate cofactor; CO(2) is released and the remaining methylamine moiety is then transferred to the lipoamide cofactor of the H protein. This Roseobacter denitrificans (strain ATCC 33942 / OCh 114) (Erythrobacter sp. (strain OCh 114)) protein is Glycine dehydrogenase (decarboxylating).